Reading from the N-terminus, the 43-residue chain is DRDSCVDKSKCSKYGYYGQCDECCKKAGDRAGNCVYFKCKCNP.

Intrachain disulfides connect Cys5–Cys23, Cys11–Cys34, Cys20–Cys39, and Cys24–Cys41.

The protein belongs to the ergtoxin family. Gamma-KTx 4 subfamily. Expressed by the venom gland.

The protein localises to the secreted. Functionally, reversibly blocks Kv11/ERG potassium channels. The chain is Potassium channel toxin gamma-KTx 4.1 from Centruroides limpidus (Mexican scorpion).